Here is a 114-residue protein sequence, read N- to C-terminus: Nucleoid-associated protein PCC8801_2554 (114 aa).

This sequence belongs to the YbaB/EbfC family. As to quaternary structure, homodimer.

Its subcellular location is the cytoplasm. The protein localises to the nucleoid. Functionally, binds to DNA and alters its conformation. May be involved in regulation of gene expression, nucleoid organization and DNA protection. This is Nucleoid-associated protein PCC8801_2554 from Rippkaea orientalis (strain PCC 8801 / RF-1) (Cyanothece sp. (strain PCC 8801)).